Reading from the N-terminus, the 68-residue chain is Large ribosomal subunit protein uL29 (68 aa).

It belongs to the universal ribosomal protein uL29 family.

The polypeptide is Large ribosomal subunit protein uL29 (Bradyrhizobium diazoefficiens (strain JCM 10833 / BCRC 13528 / IAM 13628 / NBRC 14792 / USDA 110)).